Here is a 34-residue protein sequence, read N- to C-terminus: Potassium channel toxin alpha-KTx 6.17 (34 aa).

4 disulfide bridges follow: Cys-3-Cys-24, Cys-9-Cys-29, Cys-13-Cys-31, and Cys-19-Cys-34.

It belongs to the short scorpion toxin superfamily. Potassium channel inhibitor family. Alpha-KTx 06 subfamily. As to expression, expressed by the venom gland.

The protein resides in the secreted. Functionally, this toxin reversibly blocks Shaker B potassium-channels (expressed in insect Sf9 cells) with a Kd of 96.6 nM, and presents an even better affinity toward hKv1.3 (KCNA3), blocking it with a Kd of 17.7 nM. In Opisthacanthus cayaporum (South American scorpion), this protein is Potassium channel toxin alpha-KTx 6.17.